A 252-amino-acid chain; its full sequence is Diphthine synthase (252 aa).

S-adenosyl-L-methionine-binding positions include Leu9, Asp85, Val88, 113–114 (SI), Leu165, Ala202, and His227.

This sequence belongs to the diphthine synthase family. In terms of assembly, homodimer.

It catalyses the reaction 2-[(3S)-amino-3-carboxypropyl]-L-histidyl-[translation elongation factor 2] + 3 S-adenosyl-L-methionine = diphthine-[translation elongation factor 2] + 3 S-adenosyl-L-homocysteine + 3 H(+). Its pathway is protein modification; peptidyl-diphthamide biosynthesis. S-adenosyl-L-methionine-dependent methyltransferase that catalyzes the trimethylation of the amino group of the modified target histidine residue in translation elongation factor 2 (EF-2), to form an intermediate called diphthine. The three successive methylation reactions represent the second step of diphthamide biosynthesis. This Methanospirillum hungatei JF-1 (strain ATCC 27890 / DSM 864 / NBRC 100397 / JF-1) protein is Diphthine synthase.